The sequence spans 233 residues: Probable transglycosylase IsaA (233 aa).

Residues Met1 to Ala29 form the signal peptide.

It belongs to the transglycosylase family. IsaA subfamily.

It localises to the secreted. Functionally, is able to cleave peptidoglycan. In Staphylococcus aureus (strain Mu3 / ATCC 700698), this protein is Probable transglycosylase IsaA (isaA).